We begin with the raw amino-acid sequence, 180 residues long: Oligoribonuclease (180 aa).

The 164-residue stretch at Leu-7–Leu-170 folds into the Exonuclease domain. The active site involves Tyr-128.

The protein belongs to the oligoribonuclease family.

It is found in the cytoplasm. 3'-to-5' exoribonuclease specific for small oligoribonucleotides. This chain is Oligoribonuclease, found in Pseudomonas fluorescens (strain Pf0-1).